Reading from the N-terminus, the 172-residue chain is Low molecular mass early light-inducible protein HV90, chloroplastic (172 aa).

The transit peptide at 1–38 (MATMMSMSSFAGAAVVPRSSASSFGARSLPALGRRALV) directs the protein to the chloroplast. A run of 2 helical transmembrane segments spans residues 106–126 (GQAW…VPLL) and 150–170 (FAML…APFI).

Belongs to the ELIP/psbS family.

The protein resides in the plastid. It is found in the chloroplast membrane. In terms of biological role, probably involved in the integration of pigments into the mature pigment-protein complexes. In Hordeum vulgare (Barley), this protein is Low molecular mass early light-inducible protein HV90, chloroplastic.